The sequence spans 434 residues: D-amino acid dehydrogenase (434 aa).

Residue 3–17 (VVILGSGVVGVASAW) coordinates FAD.

This sequence belongs to the DadA oxidoreductase family. FAD is required as a cofactor.

It catalyses the reaction a D-alpha-amino acid + A + H2O = a 2-oxocarboxylate + AH2 + NH4(+). Its pathway is amino-acid degradation; D-alanine degradation; NH(3) and pyruvate from D-alanine: step 1/1. Functionally, oxidative deamination of D-amino acids. In Yersinia enterocolitica serotype O:8 / biotype 1B (strain NCTC 13174 / 8081), this protein is D-amino acid dehydrogenase.